The sequence spans 356 residues: UDP-N-acetylglucosamine--N-acetylmuramyl-(pentapeptide) pyrophosphoryl-undecaprenol N-acetylglucosamine transferase (356 aa).

UDP-N-acetyl-alpha-D-glucosamine-binding positions include 14–16, Asn126, Arg162, Ser190, Ile244, and Gln289; that span reads TGG.

The protein belongs to the glycosyltransferase 28 family. MurG subfamily.

It localises to the cell inner membrane. It catalyses the reaction di-trans,octa-cis-undecaprenyl diphospho-N-acetyl-alpha-D-muramoyl-L-alanyl-D-glutamyl-meso-2,6-diaminopimeloyl-D-alanyl-D-alanine + UDP-N-acetyl-alpha-D-glucosamine = di-trans,octa-cis-undecaprenyl diphospho-[N-acetyl-alpha-D-glucosaminyl-(1-&gt;4)]-N-acetyl-alpha-D-muramoyl-L-alanyl-D-glutamyl-meso-2,6-diaminopimeloyl-D-alanyl-D-alanine + UDP + H(+). Its pathway is cell wall biogenesis; peptidoglycan biosynthesis. Functionally, cell wall formation. Catalyzes the transfer of a GlcNAc subunit on undecaprenyl-pyrophosphoryl-MurNAc-pentapeptide (lipid intermediate I) to form undecaprenyl-pyrophosphoryl-MurNAc-(pentapeptide)GlcNAc (lipid intermediate II). This is UDP-N-acetylglucosamine--N-acetylmuramyl-(pentapeptide) pyrophosphoryl-undecaprenol N-acetylglucosamine transferase from Cupriavidus pinatubonensis (strain JMP 134 / LMG 1197) (Cupriavidus necator (strain JMP 134)).